A 714-amino-acid polypeptide reads, in one-letter code: Fatty acid oxidation complex subunit alpha (714 aa).

An enoyl-CoA hydratase region spans residues 1–190 (MEMASAFTLN…KLGLVDDVVP (190 aa)). The segment at 306–714 (APLNSVGILG…FWKTTATDLQ (409 aa)) is 3-hydroxyacyl-CoA dehydrogenase.

In the N-terminal section; belongs to the enoyl-CoA hydratase/isomerase family. This sequence in the central section; belongs to the 3-hydroxyacyl-CoA dehydrogenase family. Heterotetramer of two alpha chains (FadJ) and two beta chains (FadI).

Its subcellular location is the cytoplasm. It catalyses the reaction a (3S)-3-hydroxyacyl-CoA = a (2E)-enoyl-CoA + H2O. It carries out the reaction a 4-saturated-(3S)-3-hydroxyacyl-CoA = a (3E)-enoyl-CoA + H2O. The catalysed reaction is a (3S)-3-hydroxyacyl-CoA + NAD(+) = a 3-oxoacyl-CoA + NADH + H(+). The enzyme catalyses (3S)-3-hydroxybutanoyl-CoA = (3R)-3-hydroxybutanoyl-CoA. It functions in the pathway lipid metabolism; fatty acid beta-oxidation. In terms of biological role, catalyzes the formation of a hydroxyacyl-CoA by addition of water on enoyl-CoA. Also exhibits 3-hydroxyacyl-CoA epimerase and 3-hydroxyacyl-CoA dehydrogenase activities. The polypeptide is Fatty acid oxidation complex subunit alpha (Escherichia coli (strain UTI89 / UPEC)).